The chain runs to 90 residues: uncharacterized protein (90 aa).

The segment at 62–90 (RQLKKKQAYKPDPEASFSWSANTSTRGRR) is disordered. Positions 78–90 (FSWSANTSTRGRR) are enriched in polar residues.

This is an uncharacterized protein from Escherichia coli (strain K12).